The primary structure comprises 398 residues: Neuroplastin (398 aa).

An N-terminal signal peptide occupies residues 1-28; sequence MSGSSLPSALALSLLLVSGSLLPGPGAA. Ig-like domains lie at 29–134, 148–235, and 238–329; these read QNAG…PSIT, PRIV…IEVK, and PDIT…SVVT. Topologically, residues 29–339 are extracellular; that stretch reads QNAGFVKSPM…VLRVRSHLAP (311 aa). Cysteines 52 and 116 form a disulfide. Residues 149–161 form a narpin; mediates binding with FGFR1 and has antidepressant-like activity region; sequence RIVTSEEVIIRDS. Cys170 and Cys218 are joined by a disulfide. 6 N-linked (GlcNAc...) asparagine glycosylation sites follow: Asn171, Asn197, Asn229, Asn284, Asn296, and Asn317. Cys259 and Cys316 are oxidised to a cystine. A helical transmembrane segment spans residues 340 to 360; sequence LWPFLGILAEIIILVVIIVVY. Topologically, residues 361–398 are cytoplasmic; it reads EKRKRPDEVPDDDEPAGPMKTNSTNNHKDKNLRQRNTN. Residues 365 to 398 form a disordered region; sequence RPDEVPDDDEPAGPMKTNSTNNHKDKNLRQRNTN.

Interacts with ATP2B1; this interaction stabilizes ATP2B1 and increases ATPase activity; this interaction controls T cell calcium homeostasis following T cell activation. Interacts with XKR8; promoting its localization at the cell membrane. As to expression, isoform 1 is ubiquitously expressed. Isoform 2 is expressed in brain cortex and cerebellum (at protein level).

It localises to the cell membrane. The protein resides in the postsynaptic density. In terms of biological role, probable homophilic and heterophilic cell adhesion molecule involved in long term potentiation at hippocampal excitatory synapses through activation of p38MAPK. May also regulate neurite outgrowth by activating the FGFR1 signaling pathway. May play a role in synaptic plasticity. Also acts as a chaperone for ATP2B1; stabilizes ATP2B1 and increases its ATPase activity. Promotes localization of XKR8 at the cell membrane. The protein is Neuroplastin (NPTN) of Homo sapiens (Human).